The following is a 263-amino-acid chain: uncharacterized protein (263 aa).

31–38 (GPTGSGKT) is an ATP binding site.

Belongs to the CbbQ/NirQ/NorQ/GpvN family.

This is an uncharacterized protein from Staphylococcus haemolyticus (strain JCSC1435).